The sequence spans 308 residues: Probable manganese-dependent inorganic pyrophosphatase (308 aa).

Residues His9, Asp13, Asp15, Asp75, His97, and Asp149 each contribute to the Mn(2+) site.

This sequence belongs to the PPase class C family. The cofactor is Mn(2+).

The protein resides in the cytoplasm. It catalyses the reaction diphosphate + H2O = 2 phosphate + H(+). In Listeria monocytogenes serotype 4a (strain HCC23), this protein is Probable manganese-dependent inorganic pyrophosphatase.